Here is a 505-residue protein sequence, read N- to C-terminus: Glycerol kinase (505 aa).

Threonine 13 provides a ligand contact to ADP. ATP-binding residues include threonine 13, threonine 14, and serine 15. Sn-glycerol 3-phosphate is bound at residue threonine 13. Arginine 17 serves as a coordination point for ADP. Sn-glycerol 3-phosphate-binding residues include arginine 83, glutamate 84, tyrosine 135, and aspartate 247. Glycerol-binding residues include arginine 83, glutamate 84, tyrosine 135, aspartate 247, and glutamine 248. ADP-binding residues include threonine 269 and glycine 313. Residues threonine 269, glycine 313, glutamine 317, and glycine 414 each coordinate ATP. ADP-binding residues include glycine 414 and asparagine 418.

Belongs to the FGGY kinase family.

The enzyme catalyses glycerol + ATP = sn-glycerol 3-phosphate + ADP + H(+). It participates in polyol metabolism; glycerol degradation via glycerol kinase pathway; sn-glycerol 3-phosphate from glycerol: step 1/1. Its activity is regulated as follows. Inhibited by fructose 1,6-bisphosphate (FBP). Its function is as follows. Key enzyme in the regulation of glycerol uptake and metabolism. Catalyzes the phosphorylation of glycerol to yield sn-glycerol 3-phosphate. The sequence is that of Glycerol kinase from Clavibacter michiganensis subsp. michiganensis (strain NCPPB 382).